A 133-amino-acid polypeptide reads, in one-letter code: uncharacterized protein (133 aa).

An N-terminal signal peptide occupies residues 1-23 (MSRKIIPALTIFFGPILILTAIT). Positions 82–133 (ESIKNQNSLNKEKQQQQQQQQQQQQQQQQQQQQQQKPNTPPTPLTTPSTPKK) are disordered. Low complexity predominate over residues 96 to 118 (QQQQQQQQQQQQQQQQQQQQQKP).

It is found in the secreted. This is an uncharacterized protein from Dictyostelium discoideum (Social amoeba).